Consider the following 632-residue polypeptide: 1-deoxy-D-xylulose-5-phosphate synthase (632 aa).

Thiamine diphosphate contacts are provided by residues His-75 and 117–119 (GHA). Asp-146 is a Mg(2+) binding site. Thiamine diphosphate-binding positions include 147 to 148 (AA), Asn-175, and Glu-370. A Mg(2+)-binding site is contributed by Asn-175.

The protein belongs to the transketolase family. DXPS subfamily. As to quaternary structure, homodimer. It depends on Mg(2+) as a cofactor. Thiamine diphosphate is required as a cofactor.

It catalyses the reaction D-glyceraldehyde 3-phosphate + pyruvate + H(+) = 1-deoxy-D-xylulose 5-phosphate + CO2. It participates in metabolic intermediate biosynthesis; 1-deoxy-D-xylulose 5-phosphate biosynthesis; 1-deoxy-D-xylulose 5-phosphate from D-glyceraldehyde 3-phosphate and pyruvate: step 1/1. Functionally, catalyzes the acyloin condensation reaction between C atoms 2 and 3 of pyruvate and glyceraldehyde 3-phosphate to yield 1-deoxy-D-xylulose-5-phosphate (DXP). This is 1-deoxy-D-xylulose-5-phosphate synthase from Chlamydia muridarum (strain MoPn / Nigg).